The sequence spans 368 residues: COP9 signalosome complex subunit 5 (368 aa).

The 138-residue stretch at 56-193 folds into the MPN domain; the sequence is IKISAIALLK…IGAFRTYPEG (138 aa). Zn(2+) is bound by residues His139, His141, and Asp152. The JAMM motif motif lies at 139-152; it reads HSHPGYGCWLSGID. The disordered stretch occupies residues 347–368; sequence TEPEKAGPSPSAPEPAVEMADA.

It belongs to the peptidase M67A family. CSN5 subfamily. As to quaternary structure, component of the CSN complex, probably composed of csn-1, csn-2, csn-3, csn-4, csn-5, csn-6 and csn-7. Within the complex it probably interacts directly with csn-1. Interacts with glh-1 and glh-3. Interacts with lag-1. Interacts with kgb-1. The cofactor is a divalent metal cation.

It localises to the cytoplasm. Its subcellular location is the nucleus. In terms of biological role, probable protease subunit of the COP9 signalosome complex (CSN), a complex involved in various cellular and developmental processes. The CSN complex is an essential regulator of the ubiquitin (Ubl) conjugation pathway by mediating the deneddylation of the cullin subunits of the SCF-type E3 ligase complexes, leading to decrease the Ubl ligase activity of SCF. In the complex, it probably acts as the catalytic center that mediates the cleavage of Nedd8 from cullins. It however has no metalloprotease activity by itself and requires the other subunits of the CSN complex. The CSN complex plays an essential role in embryogenesis and oogenesis and is required to regulate microtubule stability in the early embryo. Mediates mei-3/katanin targeting for degradation at the meiosis to mitosis transition via deneddylation of cul-3. May stabilize glh-1 protein levels by antagonizing kgb-1. The protein is COP9 signalosome complex subunit 5 (csn-5) of Caenorhabditis elegans.